The primary structure comprises 729 residues: Fibroblast growth factor receptor homolog 1 (729 aa).

The signal sequence occupies residues 1 to 36 (MAAAWSWRASHSTITMTSGSLVVLFLLLSIWQPAVQ). Topologically, residues 37–309 (VEGRRQMANS…VASGSLHSTS (273 aa)) are extracellular. Residues 56–101 (ARSQNKTPAITNNANQSSTSSADLDDGAADDDDNKADLPVNVSSKP) form a disordered region. The segment covering 66–77 (TNNANQSSTSSA) has biased composition (low complexity). An N-linked (GlcNAc...) asparagine glycan is attached at Asn-70. The segment covering 78 to 89 (DLDDGAADDDDN) has biased composition (acidic residues). N-linked (GlcNAc...) asparagine glycosylation is found at Asn-96, Asn-134, Asn-140, Asn-171, Asn-207, Asn-213, Asn-242, Asn-246, and Asn-282. Ig-like C2-type domains are found at residues 106 to 192 (PKKM…VIVS) and 203 to 279 (TGPL…NSLG). An intrachain disulfide couples Cys-125 to Cys-174. An intrachain disulfide couples Cys-220 to Cys-272. The helical transmembrane segment at 310-330 (FVYIFVFGGLIFIFMTTLFVF) threads the bilayer. The Cytoplasmic segment spans residues 331–729 (YAIRKMKHEK…TDNLQKWCNY (399 aa)). The 277-residue stretch at 416-692 (LVLGATLGEG…EIVEYMDKLL (277 aa)) folds into the Protein kinase domain. ATP contacts are provided by residues 422–430 (LGEGAFGRV) and Lys-443. Residue Asp-556 is the Proton acceptor of the active site. Position 587 is a phosphotyrosine; by autocatalysis (Tyr-587).

It belongs to the protein kinase superfamily. Tyr protein kinase family. Fibroblast growth factor receptor subfamily. In terms of tissue distribution, in early embryos, expression is specific to mesodermal primordium and invaginated mesodermal cells. At later stages, expression is seen in putative muscle precursor cells and in the CNS.

The protein resides in the membrane. The catalysed reaction is L-tyrosyl-[protein] + ATP = O-phospho-L-tyrosyl-[protein] + ADP + H(+). May be required for patterning of muscle precursor cells. May be essential for generation of mesodermal and endodermal layers, invaginations of various types of cells and CNS formation. This is Fibroblast growth factor receptor homolog 1 (htl) from Drosophila melanogaster (Fruit fly).